The following is a 1213-amino-acid chain: Genetic suppressor element 1 (1213 aa).

Residues 1–154 (MKGMSHEPKS…GSRGSSSGRE (154 aa)) are disordered. A Phosphoserine modification is found at S10. The segment covering 15–33 (MLSTATRTTATVNPLTPSP) has biased composition (polar residues). Composition is skewed to low complexity over residues 51-63 (SAQA…FAAA) and 76-89 (GSSL…VSSP). Residues S84 and S95 each carry the phosphoserine modification. Residues 103–114 (VPMGPIIVPPGG) show a composition bias toward low complexity. R305 is modified (asymmetric dimethylarginine). A coiled-coil region spans residues 319–402 (HSERMSSLSA…REKELLAAKA (84 aa)). The disordered stretch occupies residues 326-384 (LSAERLQMDEELRREREREREREREADREREKEREREQREKEREKELEREREKEREREL). Basic and acidic residues predominate over residues 331–384 (LQMDEELRREREREREREREADREREKEREREQREKEREKELEREREKEREREL). At T433 the chain carries Phosphothreonine. N6-acetyllysine is present on K496. Disordered regions lie at residues 527–579 (LDLG…QHTV) and 630–719 (SEKA…TARG). Composition is skewed to basic and acidic residues over residues 537 to 560 (EAEH…REPP) and 630 to 643 (SEKA…EATP). Pro residues predominate over residues 648-657 (QPPPPPPPPR). A compositionally biased stretch (polar residues) spans 681-700 (STQTILGQQRPSLSQATSFG). Position 739 is an N6-acetyllysine (K739). 4 positions are modified to phosphoserine: S766, S826, S828, and S857. 3 disordered regions span residues 816 to 858 (RKRR…NNSP), 898 to 979 (LSAA…EAPG), and 1065 to 1118 (ELQS…PRRQ). The span at 847-858 (TRYSPDEMNNSP) shows a compositional bias: polar residues. At T905 the chain carries Phosphothreonine. At S907 the chain carries Phosphoserine. Positions 1065–1081 (ELQSSSRVPLPQHNGQQ) are enriched in polar residues. Positions 1093-1197 (QEADQDSEED…ELDHLRKCLA (105 aa)) form a coiled coil. Positions 1095 to 1112 (ADQDSEEDSEEDSEEEAE) are enriched in acidic residues. Position 1099 is a phosphoserine (S1099).

May be a component of a BHC histone deacetylase complex that contains HDAC1, HDAC2, HMG20B/BRAF35, KDM1A, RCOR1/CoREST, PHF21A/BHC80, ZMYM2, ZNF217, ZMYM3, GSE1 and GTF2I.

The protein is Genetic suppressor element 1 (Gse1) of Mus musculus (Mouse).